A 388-amino-acid chain; its full sequence is Probable proton-coupled zinc antiporter SLC30A3 (388 aa).

Residues 1 to 42 (MEPSPASGGSETTRLVSPRDRSSAGGGLRLKSLFTEPSEPLP) form a disordered region. Residues 1–75 (MEPSPASGGS…SPERAQARRQ (75 aa)) lie on the Cytoplasmic side of the membrane. Phosphoserine is present on residues Ser-63 and Ser-66. The chain crosses the membrane as a helical span at residues 76–96 (LYAACVVCFIFMAGEVVGGYL). Residues 97–105 (AHSLAIMTD) are Lumenal-facing. The chain crosses the membrane as a helical span at residues 106 to 126 (AAHLLADIGSMMASLFSLWLS). Zn(2+) is bound by residues His-108 and Asp-112. Over 127-145 (TRPATRTMTFGWHRSETLG) the chain is Cytoplasmic. A helical transmembrane segment spans residues 146 to 166 (ALASVVSLWIVTGILLYLAFL). The Lumenal segment spans residues 167 to 177 (RLLHSDYHIEA). A helical membrane pass occupies residues 178–198 (GAMLLTASIAVCANMIMAFVL). At 199-235 (HQTGAPHSHGPRGAEYAPLEEGHGHPLSLGNTSVRAA) the chain is on the cytoplasmic side. The chain crosses the membrane as a helical span at residues 236-256 (FVHVLGDLLQSLGVLAASILI). Zn(2+) contacts are provided by His-238 and Asp-242. At 257 to 263 (YFKPQYK) the chain is on the lumenal side. Residues 264 to 284 (VADPISTFLFSICALGSTAPT) traverse the membrane as a helical segment. Topologically, residues 285–388 (LRDVLLVLME…CLRCREPPKA (104 aa)) are cytoplasmic.

The protein belongs to the cation diffusion facilitator (CDF) transporter (TC 2.A.4) family. SLC30A subfamily. As to quaternary structure, homodimer. Homodimerization could regulate efficiency of zinc transport. Interacts with TMEM163.

The protein localises to the cytoplasmic vesicle. It is found in the secretory vesicle. It localises to the synaptic vesicle membrane. The protein resides in the synapse. Its subcellular location is the synaptosome. The protein localises to the late endosome membrane. It is found in the lysosome membrane. It catalyses the reaction Zn(2+)(in) + 2 H(+)(out) = Zn(2+)(out) + 2 H(+)(in). Functionally, probable proton-coupled zinc ion antiporter mediating the import of zinc from cytoplasm into synaptic vesicles and participating to cellular zinc ion homeostasis in the brain. The polypeptide is Probable proton-coupled zinc antiporter SLC30A3 (Rattus norvegicus (Rat)).